Consider the following 160-residue polypeptide: LQKMGVEMALITNKPERFVAPLLDEMKLGRFFRWIIGGDTMPQKKPDPAALFFVMKMAGVPASQALFVGDSRSDVQAAKAAGVACVALSYGYNHGRPIAEENPAMVIDDLRKLIPGCLDMDAEILLPDIKRPSPRESIVVVTRKLWMKVIKALARWRWRA.

Residue D70 coordinates Mg(2+).

The protein belongs to the HAD-like hydrolase superfamily. CbbY/CbbZ/Gph/YieH family. Requires Mg(2+) as cofactor.

The enzyme catalyses 2-phosphoglycolate + H2O = glycolate + phosphate. The protein operates within organic acid metabolism; glycolate biosynthesis; glycolate from 2-phosphoglycolate: step 1/1. Functionally, specifically catalyzes the dephosphorylation of 2-phosphoglycolate. Is involved in the dissimilation of the intracellular 2-phosphoglycolate formed during the DNA repair of 3'-phosphoglycolate ends, a major class of DNA lesions induced by oxidative stress. The polypeptide is Probable phosphoglycolate phosphatase (gph) (Pseudomonas savastanoi (Pseudomonas syringae pv. savastanoi)).